A 255-amino-acid chain; its full sequence is MSFTVIIPARYSSTRLPHKPLLDIAGKPMIQHVWEKAQQSGATRVIVATDHPEIEQVVTRFGGEVCLTSDKHNSGTERLAEVIEKMAIADDEIIVNIQGDEPLIPPLIVAQVAENLDKHQVNMATLAVKLTTREELFNPNVVKTLTDKNGMALYFSRATIPFGRDYFPQCDDAFVQQQNYLRHIGIYAYRAGFVKQYVAWEPTALEQLESLEQLRALWYGEKIHLDLAKEAPQVGVDTAEDLERVRQILNILCSQ.

This sequence belongs to the KdsB family.

Its subcellular location is the cytoplasm. The catalysed reaction is 3-deoxy-alpha-D-manno-oct-2-ulosonate + CTP = CMP-3-deoxy-beta-D-manno-octulosonate + diphosphate. Its pathway is nucleotide-sugar biosynthesis; CMP-3-deoxy-D-manno-octulosonate biosynthesis; CMP-3-deoxy-D-manno-octulosonate from 3-deoxy-D-manno-octulosonate and CTP: step 1/1. It participates in bacterial outer membrane biogenesis; lipopolysaccharide biosynthesis. Functionally, activates KDO (a required 8-carbon sugar) for incorporation into bacterial lipopolysaccharide in Gram-negative bacteria. This chain is 3-deoxy-manno-octulosonate cytidylyltransferase, found in Glaesserella parasuis serovar 5 (strain SH0165) (Haemophilus parasuis).